Consider the following 184-residue polypeptide: Ribosome-recycling factor (184 aa).

It belongs to the RRF family.

The protein localises to the cytoplasm. Responsible for the release of ribosomes from messenger RNA at the termination of protein biosynthesis. May increase the efficiency of translation by recycling ribosomes from one round of translation to another. The chain is Ribosome-recycling factor from Psychrobacter sp. (strain PRwf-1).